A 456-amino-acid chain; its full sequence is Armadillo repeat-containing X-linked protein 1 (456 aa).

Over 1–6 the chain is Mitochondrial intermembrane; that stretch reads MGRTRE. Mitochondrion outer membrane (MOM)-targeting sequence stretches follow at residues 1 to 6 and 26 to 36; these read MGRTRE and RLTWGKDENEK. The helical; Signal-anchor transmembrane segment at 7–29 threads the bilayer; that stretch reads AGCVAAGMVIGAGACYCVYRLTW. The Cytoplasmic segment spans residues 30–456; that stretch reads GKDENEKLWD…VKVLKVLTKL (427 aa). Disordered stretches follow at residues 37 to 106 and 139 to 186; these read LWDE…SGGG and RTLT…APAT. The span at 38–50 shows a compositional bias: acidic residues; sequence WDEEEEEEEEEEE. Basic and acidic residues-rich tracts occupy residues 51 to 62 and 72 to 81; these read KSCSDKTEKELK and KPQDDSKSKV. Positions 162 to 180 are enriched in basic residues; it reads SRARNRTSGKVKRKNRSKS. ARM repeat units follow at residues 198 to 238, 240 to 279, 361 to 401, and 418 to 456; these read PYKI…NNAA, SFNQNAIRELGGVPIIAKLIKTRDPIIREKTYNALNNLSV, PAMT…NIND, and SSLFFLFKESGVCVKKIKALASHKDLVVKVKVLKVLTKL.

It belongs to the eutherian X-chromosome-specific Armcx family. In terms of assembly, interacts with MIRO1. As to expression, widely expressed in the adult nervous tissue, especially in the forebrain, including the cerebral cortex, hippocampus and thalamus.

It is found in the mitochondrion. The protein resides in the mitochondrion outer membrane. Its function is as follows. Regulates mitochondrial transport during axon regeneration. Increases the proportion of motile mitochondria by recruiting stationary mitochondria into the motile pool. Enhances mitochondria movement and neurite growth in both adult axons and embryonic neurons. Promotes neuronal survival and axon regeneration after nerve injury. May link mitochondria to the Trak1-kinesin motor complex via its interaction with Miro1. The sequence is that of Armadillo repeat-containing X-linked protein 1 (Armcx1) from Mus musculus (Mouse).